The chain runs to 222 residues: Phosphoglycolate phosphatase (222 aa).

Asp8 serves as the catalytic Nucleophile. Residues Asp8 and Asp10 each contribute to the Mg(2+) site. Lys146 is a substrate binding site. Mg(2+) is bound by residues Asp169 and Asp173.

This sequence belongs to the archaeal SPP-like hydrolase family. It depends on Mg(2+) as a cofactor.

It catalyses the reaction 2-phosphoglycolate + H2O = glycolate + phosphate. Functionally, catalyzes the dephosphorylation of 2-phosphoglycolate. In Methanothrix thermoacetophila (strain DSM 6194 / JCM 14653 / NBRC 101360 / PT) (Methanosaeta thermophila), this protein is Phosphoglycolate phosphatase.